The following is a 167-amino-acid chain: CDP-archaeol synthase (167 aa).

Transmembrane regions (helical) follow at residues 4 to 24, 51 to 71, 80 to 100, 104 to 124, and 139 to 158; these read ILEA…PVIL, GFLG…IIYP, FKVS…GSFI, LNLP…LISA, and VLLL…VLAY.

It belongs to the CDP-archaeol synthase family. Mg(2+) is required as a cofactor.

It localises to the cell membrane. The catalysed reaction is 2,3-bis-O-(geranylgeranyl)-sn-glycerol 1-phosphate + CTP + H(+) = CDP-2,3-bis-O-(geranylgeranyl)-sn-glycerol + diphosphate. It functions in the pathway membrane lipid metabolism; glycerophospholipid metabolism. Functionally, catalyzes the formation of CDP-2,3-bis-(O-geranylgeranyl)-sn-glycerol (CDP-archaeol) from 2,3-bis-(O-geranylgeranyl)-sn-glycerol 1-phosphate (DGGGP) and CTP. This reaction is the third ether-bond-formation step in the biosynthesis of archaeal membrane lipids. The sequence is that of CDP-archaeol synthase from Pyrococcus furiosus (strain ATCC 43587 / DSM 3638 / JCM 8422 / Vc1).